Consider the following 59-residue polypeptide: Large ribosomal subunit protein bL32 (59 aa).

Positions 1–40 are disordered; it reads MAVQQNKKSPSKRGMHRSHDFLRTTPLSVDPGTGEVHLRH.

The protein belongs to the bacterial ribosomal protein bL32 family.

This chain is Large ribosomal subunit protein bL32, found in Nitrosospira multiformis (strain ATCC 25196 / NCIMB 11849 / C 71).